A 557-amino-acid polypeptide reads, in one-letter code: Hepatocyte nuclear factor 1-beta (557 aa).

The dimerization stretch occupies residues 1-31 (MVSKLTSLQQELLSALLSSGVTKEVLVQALE). The HNF-p1 domain occupies 1–32 (MVSKLTSLQQELLSALLSSGVTKEVLVQALEE). Ser-49, Ser-52, Ser-75, and Ser-80 each carry phosphoserine. Residues 64 to 85 (TLTNGHAKGRLSGDEGSEDGDD) form a disordered region. The region spanning 93–188 (KELQALNTEE…ILRQFNQTVQ (96 aa)) is the POU-specific atypical domain. A DNA-binding region (homeobox; HNF1-type) is located at residues 231–311 (MRRNRFKWGP…NRRKEEAFRQ (81 aa)). The segment at 324–352 (HSLNPLLSHGSPHHQPSSSPPNKLSGVRY) is disordered. Residues 328–344 (PLLSHGSPHHQPSSSPP) are compositionally biased toward low complexity.

Belongs to the HNF1 homeobox family. Binds DNA as a dimer. Can form homodimer or heterodimer with HNF1-alpha. Interacts (via HNF-p1 domain) with PCBD1; the interaction increases its transactivation activity.

It localises to the nucleus. In terms of biological role, transcription factor that binds to the inverted palindrome 5'-GTTAATNATTAAC-3'. Binds to the FPC element in the cAMP regulatory unit of the PLAU gene. Transcriptional activity is increased by coactivator PCBD1. The sequence is that of Hepatocyte nuclear factor 1-beta (HNF1B) from Homo sapiens (Human).